Reading from the N-terminus, the 1189-residue chain is Pumilio homolog 1 (1189 aa).

Ser-2 is subject to N-acetylserine. Phosphoserine is present on Ser-19. The disordered stretch occupies residues 22–73; it reads LKHHPQEPANPNMPVVLTSGTGSQAQPQPAANQALAAGTHSSPVPGSIGVAG. The span at 45–58 shows a compositional bias: low complexity; the sequence is QAQPQPAANQALAA. Ser-75, Ser-98, and Ser-106 each carry phosphoserine. The residue at position 112 (Thr-112) is a Phosphothreonine. Ser-124, Ser-159, Ser-197, Ser-209, and Ser-229 each carry phosphoserine. The segment at 233-272 is disordered; sequence SCLRKGGFGPRDADSDENDKGEKKNKGTFDGDKLGDLKEE. Residues 250 to 272 are compositionally biased toward basic and acidic residues; that stretch reads NDKGEKKNKGTFDGDKLGDLKEE. Ser-305 is subject to Phosphoserine. The segment covering 491–503 has biased composition (low complexity); the sequence is QQSAPQAQQGQQQ. 2 disordered regions span residues 491 to 525 and 614 to 647; these read QQSA…GQQT and AGTT…SSFY. Residues 512–525 are compositionally biased toward polar residues; the sequence is RPLTPNQNQQGQQT. Thr-515 carries the phosphothreonine modification. Residues 627–647 are compositionally biased toward low complexity; sequence QQPQPQPQQQPSNNLASSSFY. Residues Ser-710 and Ser-715 each carry the phosphoserine modification. The disordered stretch occupies residues 743-773; the sequence is GPVGMPLPSQGPGHSQTPPPSLSSHGSSSSL. Low complexity predominate over residues 764–773; the sequence is LSSHGSSSSL. Omega-N-methylarginine is present on Arg-797. A phosphoserine mark is found at Ser-807 and Ser-823. The 343-residue stretch at 829-1171 folds into the PUM-HD domain; sequence GRSRLLEDFR…HILAKLEKYY (343 aa). Pumilio repeat units lie at residues 849-884, 885-920, 921-958, 959-994, 995-1030, 1031-1066, 1067-1102, and 1106-1145; these read EIAG…LVFN, EILQ…ALAE, RIRG…EMVR, ELDG…FIID, AFKG…PILE, ELHQ…KIVA, EIRG…VLID, and TMND…IVMH. Residues 864 to 868 form an adenine-nucleotide binding in RNA target region; it reads SRFIQ. Residues 900–904 are uracil-nucleotide binding in RNA target; sequence NYVIQ. The segment at 936 to 940 is adenine-nucleotide binding in RNA target; it reads CRVIQ. The segment at 974 to 978 is non-specific-nucleotide binding in RNA target; the sequence is NHVVQ. Residues 1010–1014 form an adenine-nucleotide binding in RNA target region; that stretch reads CRVIQ. Positions 1046 to 1050 are uracil-nucleotide binding in RNA target; the sequence is NYVIQ. Guanine-nucleotide binding in RNA target stretches follow at residues 1082–1086 and 1083–1086; these read SNVVE and NVVE. The interval 1125 to 1129 is uracil-nucleotide binding in RNA target; sequence NYVVQ.

Recruits the CCR4-POP2-NOT deadenylase leading to translational inhibition and mRNA degradation. Interacts with TRIM71 (via NHL repeats) in an RNA-dependent manner. In terms of processing, phosphorylation at Ser-715 promotes RNA-binding activity. Following growth factor stimulation phosphorylated at Ser-715, promoting binding to the 3'-UTR of CDKN1B/p27 mRNA. Widely expressed. Expressed in brain, heart, kidney, liver, lung, skin, intestine, spleen, testis and thymus. Weakly or not expressed in muscles and stomach. Expressed at various stages of myeloid and lymphoid cell development. Highly expressed in testis. Expressed in all major brain regions (at protein level).

It is found in the cytoplasm. The protein resides in the P-body. Its subcellular location is the cytoplasmic granule. Its function is as follows. Sequence-specific RNA-binding protein that acts as a post-transcriptional repressor by binding the 3'-UTR of mRNA targets. Binds to an RNA consensus sequence, the Pumilio Response Element (PRE), 5'-UGUANAUA-3', that is related to the Nanos Response Element (NRE). Mediates post-transcriptional repression of transcripts via different mechanisms: acts via direct recruitment of the CCR4-POP2-NOT deadenylase leading to translational inhibition and mRNA degradation. Also mediates deadenylation-independent repression by promoting accessibility of miRNAs. Following growth factor stimulation, phosphorylated and binds to the 3'-UTR of CDKN1B/p27 mRNA, inducing a local conformational change that exposes miRNA-binding sites, promoting association of miR-221 and miR-222, efficient suppression of CDKN1B/p27 expression, and rapid entry to the cell cycle. Acts as a post-transcriptional repressor of E2F3 mRNAs by binding to its 3'-UTR and facilitating miRNA regulation. Represses a program of genes necessary to maintain genomic stability such as key mitotic, DNA repair and DNA replication factors. Its ability to repress those target mRNAs is regulated by the lncRNA NORAD (non-coding RNA activated by DNA damage) which, due to its high abundance and multitude of PUMILIO binding sites, is able to sequester a significant fraction of PUM1 and PUM2 in the cytoplasm. Involved in neuronal functions by regulating ATXN1 mRNA levels: acts by binding to the 3'-UTR of ATXN1 transcripts, leading to their down-regulation independently of the miRNA machinery. In testis, acts as a post-transcriptional regulator of spermatogenesis by binding to the 3'-UTR of mRNAs coding for regulators of p53/TP53. Involved in embryonic stem cell renewal by facilitating the exit from the ground state: acts by targeting mRNAs coding for naive pluripotency transcription factors and accelerates their down-regulation at the onset of differentiation. Binds specifically to miRNA MIR199A precursor, with PUM2, regulates miRNA MIR199A expression at a postranscriptional level. The protein is Pumilio homolog 1 of Mus musculus (Mouse).